The primary structure comprises 457 residues: Peptidyl-prolyl cis-trans isomerase FKBP5 (457 aa).

Methionine 1 is modified (N-acetylmethionine). The disordered stretch occupies residues 1–26 (MTTDEGAKNSGESPTATVAEQGEDIT). Serine 13 carries the post-translational modification Phosphoserine. Lysine 28 carries the post-translational modification N6-acetyllysine. The PPIase FKBP-type 1 domain occupies 50 to 138 (GDKVYVHYKG…FFEIELLDFK (89 aa)). Position 155 is an N6-acetyllysine (lysine 155). In terms of domain architecture, PPIase FKBP-type 2 spans 165-251 (GATVEIHLEG…IYEVTLKSFE (87 aa)). TPR repeat units follow at residues 268–301 (AAIV…LEME), 317–350 (LAAF…DSAN), and 351–384 (EKGL…NPQN). Residues 421–457 (AKEEANKAMGKKTSEGVTNEKGTDSSAVEEEKAEGHV) form a disordered region. Serine 445 is modified (phosphoserine).

As to quaternary structure, part of a heteromultimeric cytoplasmic complex with HSP90AA1, HSPA1A/HSPA1B and steroid receptors. Upon ligand binding dissociates from the complex and FKBP4 takes its place. Interacts with functionally mature heterooligomeric progesterone receptor complexes along with HSP90 and TEBP. Interacts with NR3C1. Interacts with Akt/AKT1 and PHLPP1; enhancing dephosphorylation and subsequent activation of Akt/AKT1. Interacts with IFI44L; this interaction modulates the kinase activity of IKBKB and IKBKE. Interacts with IKBKB and IKBKE. Post-translationally, acetylation impairs ability to promote interaction between Akt/AKT1 and PHLPP1. Deacetylation by SIRT7 promotes interaction between Akt/AKT1 and PHLPP1, leading to suppress Akt/AKT1 activation. In terms of processing, ubiquitinated, leading to degradation in a proteasome-dependent manner. Deubiquitinated by USP49, leading to stabilization.

The protein localises to the cytoplasm. It is found in the nucleus. The enzyme catalyses [protein]-peptidylproline (omega=180) = [protein]-peptidylproline (omega=0). Its activity is regulated as follows. Inhibited by both FK506 and rapamycin. Immunophilin protein with PPIase and co-chaperone activities. Component of unligated steroid receptors heterocomplexes through interaction with heat-shock protein 90 (HSP90). Plays a role in the intracellular trafficking of heterooligomeric forms of steroid hormone receptors maintaining the complex into the cytoplasm when unliganded. Acts as a regulator of Akt/AKT1 activity by promoting the interaction between Akt/AKT1 and PHLPP1, thereby enhancing dephosphorylation and subsequent activation of Akt/AKT1. Interacts with IKBKE and IKBKB which facilitates IKK complex assembly leading to increased IKBKE and IKBKB kinase activity, NF-kappaB activation, and IFN production. This is Peptidyl-prolyl cis-trans isomerase FKBP5 (FKBP5) from Chlorocebus aethiops (Green monkey).